The sequence spans 750 residues: GTP pyrophosphokinase rsh (750 aa).

An HD domain is found at 45-144 (YFSHPLEVAA…VKLADRLHNM (100 aa)). Positions 390-451 (DQVFCFTPKG…KNGDEVDIIR (62 aa)) constitute a TGS domain. Positions 587-613 (AAKVDPAATTPKPGKRALPIRGTNPDL) are disordered. Positions 676-750 (RISVSAINSP…SVSSAKRVNG (75 aa)) constitute an ACT domain.

The protein belongs to the RelA/SpoT family.

It catalyses the reaction GTP + ATP = guanosine 3'-diphosphate 5'-triphosphate + AMP. Its function is as follows. Functions as a (p)ppGpp synthase. In eubacteria ppGpp (guanosine 3'-diphosphate 5'-diphosphate) is a mediator of the stringent response that coordinates a variety of cellular activities in response to changes in nutritional abundance. It is necessary for persistence in mice, essential for intracellular growth of Brucella and required for expression of the type IV secretion system VirB and therefore plays a role in adaptation of Brucella to its intracellular host environment. This is GTP pyrophosphokinase rsh (rsh) from Brucella suis biovar 1 (strain 1330).